The following is a 1033-amino-acid chain: Isoleucine--tRNA ligase (1033 aa).

Positions 47–57 match the 'HIGH' region motif; the sequence is PTANGLPHVGH. The 'KMSKS' region motif lies at 590 to 594; it reads KMSKS. ATP is bound at residue lysine 593.

The protein belongs to the class-I aminoacyl-tRNA synthetase family. IleS type 2 subfamily. In terms of assembly, monomer. It depends on Zn(2+) as a cofactor.

It localises to the cytoplasm. The catalysed reaction is tRNA(Ile) + L-isoleucine + ATP = L-isoleucyl-tRNA(Ile) + AMP + diphosphate. Catalyzes the attachment of isoleucine to tRNA(Ile). As IleRS can inadvertently accommodate and process structurally similar amino acids such as valine, to avoid such errors it has two additional distinct tRNA(Ile)-dependent editing activities. One activity is designated as 'pretransfer' editing and involves the hydrolysis of activated Val-AMP. The other activity is designated 'posttransfer' editing and involves deacylation of mischarged Val-tRNA(Ile). The sequence is that of Isoleucine--tRNA ligase from Bacillus thuringiensis (strain Al Hakam).